The sequence spans 228 residues: UPF0758 protein SH1266 (228 aa).

The 123-residue stretch at 102-224 (KITSPSDVSN…YASLVEEGYF (123 aa)) folds into the MPN domain. Zn(2+) is bound by residues His173, His175, and Asp186. Residues 173-186 (HNHPSGDVTPSKED) carry the JAMM motif motif.

This sequence belongs to the UPF0758 family.

The sequence is that of UPF0758 protein SH1266 from Staphylococcus haemolyticus (strain JCSC1435).